Here is a 223-residue protein sequence, read N- to C-terminus: Phosphoribosylformylglycinamidine synthase subunit PurQ (223 aa).

The Glutamine amidotransferase type-1 domain occupies 3–223 (FAVLVFPGSN…MVNSWREQNV (221 aa)). Residue Cys-85 is the Nucleophile of the active site. Catalysis depends on residues His-193 and Glu-195.

Part of the FGAM synthase complex composed of 1 PurL, 1 PurQ and 2 PurS subunits.

Its subcellular location is the cytoplasm. The catalysed reaction is N(2)-formyl-N(1)-(5-phospho-beta-D-ribosyl)glycinamide + L-glutamine + ATP + H2O = 2-formamido-N(1)-(5-O-phospho-beta-D-ribosyl)acetamidine + L-glutamate + ADP + phosphate + H(+). The enzyme catalyses L-glutamine + H2O = L-glutamate + NH4(+). The protein operates within purine metabolism; IMP biosynthesis via de novo pathway; 5-amino-1-(5-phospho-D-ribosyl)imidazole from N(2)-formyl-N(1)-(5-phospho-D-ribosyl)glycinamide: step 1/2. Part of the phosphoribosylformylglycinamidine synthase complex involved in the purines biosynthetic pathway. Catalyzes the ATP-dependent conversion of formylglycinamide ribonucleotide (FGAR) and glutamine to yield formylglycinamidine ribonucleotide (FGAM) and glutamate. The FGAM synthase complex is composed of three subunits. PurQ produces an ammonia molecule by converting glutamine to glutamate. PurL transfers the ammonia molecule to FGAR to form FGAM in an ATP-dependent manner. PurS interacts with PurQ and PurL and is thought to assist in the transfer of the ammonia molecule from PurQ to PurL. The polypeptide is Phosphoribosylformylglycinamidine synthase subunit PurQ (Staphylococcus haemolyticus (strain JCSC1435)).